We begin with the raw amino-acid sequence, 93 residues long: Sec-independent protein translocase protein TatA (93 aa).

A helical transmembrane segment spans residues 1 to 21 (MGSLSPWHWAILAVVVILLFG). The tract at residues 45–93 (EMQSENKTETSALGAQSESSAANPTPVQSQRVDPPAPSEQGHSEARPAS) is disordered. Positions 53 to 75 (ETSALGAQSESSAANPTPVQSQR) are enriched in polar residues.

Belongs to the TatA/E family. As to quaternary structure, the Tat system comprises two distinct complexes: a TatABC complex, containing multiple copies of TatA, TatB and TatC subunits, and a separate TatA complex, containing only TatA subunits. Substrates initially bind to the TatABC complex, which probably triggers association of the separate TatA complex to form the active translocon.

Its subcellular location is the cell membrane. Its function is as follows. Part of the twin-arginine translocation (Tat) system that transports large folded proteins containing a characteristic twin-arginine motif in their signal peptide across membranes. TatA could form the protein-conducting channel of the Tat system. This Mycolicibacterium paratuberculosis (strain ATCC BAA-968 / K-10) (Mycobacterium paratuberculosis) protein is Sec-independent protein translocase protein TatA.